Consider the following 759-residue polypeptide: Protein YdeP (759 aa).

[4Fe-4S] cluster contacts are provided by Cys-49 and Cys-52.

Belongs to the prokaryotic molybdopterin-containing oxidoreductase family. It depends on [4Fe-4S] cluster as a cofactor. Requires Mo-bis(molybdopterin guanine dinucleotide) as cofactor.

Functionally, probably involved in acid resistance. In Shigella flexneri, this protein is Protein YdeP (ydeP).